The primary structure comprises 117 residues: Immunoglobulin heavy variable 3-7 (117 aa).

The N-terminal stretch at 1–19 (MELGLSWVFLVAILEGVQC) is a signal peptide. The segment at 20–44 (EVQLVESGGGLVQPGGSLRLSCAAS) is framework-1. Residues 20 to 117 (EVQLVESGGG…EDTAVYYCAR (98 aa)) enclose the Ig-like domain. An intrachain disulfide couples Cys41 to Cys115. Positions 45–52 (GFTFSSYW) are complementarity-determining-1. The interval 53-69 (MSWVRQAPGKGLEWVAN) is framework-2. The segment at 70 to 77 (IKQDGSEK) is complementarity-determining-2. Residues 78–115 (YYVDSVKGRFTISRDNAKNSLYLQMNSLRAEDTAVYYC) form a framework-3 region. Residues 116-117 (AR) are complementarity-determining-3.

Immunoglobulins are composed of two identical heavy chains and two identical light chains; disulfide-linked.

The protein localises to the secreted. It localises to the cell membrane. In terms of biological role, v region of the variable domain of immunoglobulin heavy chains that participates in the antigen recognition. Immunoglobulins, also known as antibodies, are membrane-bound or secreted glycoproteins produced by B lymphocytes. In the recognition phase of humoral immunity, the membrane-bound immunoglobulins serve as receptors which, upon binding of a specific antigen, trigger the clonal expansion and differentiation of B lymphocytes into immunoglobulins-secreting plasma cells. Secreted immunoglobulins mediate the effector phase of humoral immunity, which results in the elimination of bound antigens. The antigen binding site is formed by the variable domain of one heavy chain, together with that of its associated light chain. Thus, each immunoglobulin has two antigen binding sites with remarkable affinity for a particular antigen. The variable domains are assembled by a process called V-(D)-J rearrangement and can then be subjected to somatic hypermutations which, after exposure to antigen and selection, allow affinity maturation for a particular antigen. This chain is Immunoglobulin heavy variable 3-7, found in Homo sapiens (Human).